The chain runs to 68 residues: Protein transport protein Sec61 subunit gamma (68 aa).

Residues 1 to 32 (MDQVMAWVEPGKQFAKDSIRLVKRCTKPDRKE) are Cytoplasmic-facing. Residues 33–61 (FQKIAVATAIGFAIMGFIGFFVKLIHIPI) form a helical membrane-spanning segment. At 62–68 (NNIIVGS) the chain is on the extracellular side.

The protein belongs to the SecE/SEC61-gamma family. Heterotrimeric complex composed of SEC61-alpha, SEC61-beta and SEC61-gamma. Component of the ribosome-associated ER translocon complex.

The protein localises to the endoplasmic reticulum membrane. Functionally, necessary for protein translocation in the endoplasmic reticulum and multi-pass membrane protein biogenesis. This chain is Protein transport protein Sec61 subunit gamma (SEC61G), found in Ciona intestinalis (Transparent sea squirt).